Consider the following 223-residue polypeptide: Probable cell wall protein PGA61 (223 aa).

The signal sequence occupies residues 1–16 (MKSGLLLAVILPVAFA). A glycan (N-linked (GlcNAc...) asparagine) is linked at Asn-25. A disordered region spans residues 83-134 (GAPSSSSTPTSSTETTSSTEAETTEAETTEQPSSSTSSNTESSKTTILETPS). Composition is skewed to low complexity over residues 84–103 (APSS…STEA) and 111–128 (TEQP…SKTT). The N-linked (GlcNAc...) asparagine glycan is linked to Asn-188. The GPI-anchor amidated asparagine moiety is linked to residue Asn-202. Positions 203 to 223 (GAGRAAVIGSGSLLALLLNFI) are cleaved as a propeptide — removed in mature form.

Belongs to the IHD1 family. Post-translationally, the GPI-anchor is attached to the protein in the endoplasmic reticulum and serves to target the protein to the cell surface. There, the glucosamine-inositol phospholipid moiety is cleaved off and the GPI-modified mannoprotein is covalently attached via its lipidless GPI glycan remnant to the 1,6-beta-glucan of the outer cell wall layer.

It is found in the secreted. Its subcellular location is the cell wall. The protein localises to the membrane. In terms of biological role, probable GPI-anchored cell wall protein that may be involved in cell wall organization, hyphal growth, as well as in virulence. The protein is Probable cell wall protein PGA61 (PGA61) of Candida albicans (strain SC5314 / ATCC MYA-2876) (Yeast).